A 185-amino-acid polypeptide reads, in one-letter code: Probable prefoldin subunit 3 (185 aa).

This sequence belongs to the prefoldin subunit alpha family. Heterohexamer of two PFD-alpha type and four PFD-beta type subunits.

In terms of biological role, binds specifically to cytosolic chaperonin (c-CPN) and transfers target proteins to it. Binds to nascent polypeptide chain and promotes folding in an environment in which there are many competing pathways for nonnative proteins. The chain is Probable prefoldin subunit 3 (pfd-3) from Caenorhabditis elegans.